A 268-amino-acid polypeptide reads, in one-letter code: Microtubule-associated protein RP/EB family member 1 (268 aa).

Ala2 bears the N-acetylalanine mark. Residues 14 to 116 (NLSRHDMLAW…FVQWFKKFFD (103 aa)) form the Calponin-homology (CH) domain. Residue Lys66 is modified to N6-crotonyllysine. Tyr124 bears the Phosphotyrosine mark. Residues 124–268 (YDPVAARQGQ…GGPQEEQEEY (145 aa)) are interaction with MTUS2/TIP150. Positions 147–160 (NKPKKPLSSSSAAP) are enriched in low complexity. The tract at residues 147 to 184 (NKPKKPLSSSSAAPQRPITTHRTTATPKAGPGVVRKNP) is disordered. Position 155 is a phosphoserine (Ser155). Residues 163–172 (PITTHRTTAT) show a composition bias toward polar residues. Positions 185 to 255 (GVGNGDDEAA…LYATDEGFVI (71 aa)) constitute an EB1 C-terminal domain. The interval 185 to 268 (GVGNGDDEAA…GGPQEEQEEY (84 aa)) is interaction with CDK5RAP2. Positions 206 to 211 (TVEDLE) are interaction with APC. The segment at 208–268 (EDLEKERDFY…GGPQEEQEEY (61 aa)) is DCTN1-binding. Lys220 carries the N6-acetyllysine modification. The segment at 220-242 (KLRNIELICQENEGENNPVLQRI) is APC-binding. The interaction with SKA1 stretch occupies residues 232 to 255 (EGENNPVLQRIVDILYATDEGFVI).

This sequence belongs to the MAPRE family. In terms of assembly, homodimer. Heterodimer with MAPRE3. Interacts with DCTN1, DCTN2, TERF1 and dynein intermediate chain. Interaction with DIAPH1 and DIAPH2. Interacts (via C-terminal residues 206-211) with APC (via C-terminal residues 2674-2845); the interaction inhibits association with and bundling of F-actin. Interacts with CLASP2, DST, KIF2C and STIM1; probably required for their targeting to the growing microtubule plus ends. Interacts with MTUS2; interaction is direct and probably targets MTUS2 to microtubules. Interacts (via C-terminus) with SKA1 (via SXIP motif); the interaction is direct and stabilizes the kinetochore-microtubule attachment of the SKA1 complex. Interacts with APC2. Interacts with CLASP1. Interacts with CDK5RAP2. Interacts with MACF1. Interacts with RABL2/RABL2A; binds preferentially to GTP-bound RABL2. Interacts with KCNAB2. Interacts (via C-terminus) with CLIP1. Interacts with SLAIN2 and SLAIN1. Interacts with KIF18B; this interaction is required for efficient accumulation of KIF18B at microtubule plus ends. Interacts with MISP. Interacts with KNSTRN. Interacts with NCKAP5L. Interacts with CAMSAP2. Interacts with PDE4DIP isoform 13/MMG8/SMYLE; this interaction is required for its recruitment to the Golgi apparatus. Forms a pericentrosomal complex with AKAP9, CDK5RAP2 and PDE4DIP isoform 13/MMG8/SMYLE; within this complex, MAPRE1 binding to CDK5RAP2 may be mediated by PDE4DIP. Interacts with AKNA. Interacts with GAS2L1, GAS2L2, and GAS2L3. Acetylation at Lys-220 by KAT2B/PCAF promotes dynamic kinetochore-microtubule interactions in early mitosis. Post-translationally, crotonylated by KAT5 during mitosis, promoting astral microtubule plasticity and dynamic connection between astral microtubules and the cortex during mitotic chromosome segregation, thereby ensuring accurate spindle positioning in mitosis. Decrotonylated by HDAC3.

The protein resides in the cytoplasm. The protein localises to the cytoskeleton. It localises to the microtubule organizing center. It is found in the centrosome. Its subcellular location is the golgi apparatus. The protein resides in the spindle. The protein localises to the spindle pole. Plus-end tracking protein (+TIP) that binds to the plus-end of microtubules and regulates the dynamics of the microtubule cytoskeleton. Recruits other +TIP proteins to microtubules by binding to a conserved Ser-X-Leu-Pro (SXLP) motif in their polypeptide chains. Promotes cytoplasmic microtubule nucleation and elongation. Involved in mitotic spindle positioning by stabilizing microtubules and promoting dynamic connection between astral microtubules and the cortex during mitotic chromosome segregation. Assists chromosome alignment in metaphase by recruiting the SKA complex to the spindle and stabilizing its interactions with microtubule bundles (K-fibers). Also acts as a regulator of minus-end microtubule organization: interacts with the complex formed by AKAP9 and PDE4DIP, leading to recruit CAMSAP2 to the Golgi apparatus, thereby tethering non-centrosomal minus-end microtubules to the Golgi, an important step for polarized cell movement. Promotes elongation of CAMSAP2-decorated microtubule stretches on the minus-end of microtubules. Acts as a regulator of autophagosome transport via interaction with CAMSAP2. Functions downstream of Rho GTPases and DIAPH1 in stable microtubule formation. May play a role in cell migration. The polypeptide is Microtubule-associated protein RP/EB family member 1 (MAPRE1) (Bos taurus (Bovine)).